Consider the following 418-residue polypeptide: Probable carboxypeptidase AO090166000075 (418 aa).

Residues 1-18 (MKATDLFHVTALVAGALA) form the signal peptide. Asn-74 carries an N-linked (GlcNAc...) asparagine glycan. Residue Asp-147 coordinates Zn(2+). An N-linked (GlcNAc...) asparagine glycan is attached at Asn-168. Glu-179 (proton acceptor) is an active-site residue. Glu-180 contributes to the Zn(2+) binding site.

The protein belongs to the peptidase M20A family. The cofactor is Zn(2+).

It is found in the secreted. The protein is Probable carboxypeptidase AO090166000075 of Aspergillus oryzae (strain ATCC 42149 / RIB 40) (Yellow koji mold).